Here is a 1067-residue protein sequence, read N- to C-terminus: Kinesin-like protein KIF11 (1067 aa).

One can recognise a Kinesin motor domain in the interval 18–359; sequence NIQVVVRCRP…LEYANRAKNI (342 aa). 105 to 112 contributes to the ATP binding site; that stretch reads GQTGTGKT. A coiled-coil region spans residues 365–480; it reads VNQKLTKRAL…SKEQLAQEAF (116 aa). The residue at position 937 (T937) is a Phosphothreonine; by CDK1. Position 1046 is a phosphoserine; by NEK6 (S1046). Residues 1048–1067 form a disordered region; sequence IMDEAEQSLPKSKLPLRMQN.

It belongs to the TRAFAC class myosin-kinesin ATPase superfamily. Kinesin family. BimC subfamily. As to quaternary structure, heterotetramer of two heavy and two light chains. Interacts with aurka. Phosphorylation of Thr-937 during mitosis controls the association of this protein with the spindle apparatus. Post-translationally, a subset of this protein primarily localized at the spindle pole is phosphorylated by NEK6 during mitosis. In terms of processing, phosphorylated on a serine residue by aurka.

The protein resides in the cytoplasm. It localises to the cytoskeleton. It is found in the spindle pole. In terms of biological role, plus end-directed motor protein required for establishing a bipolar spindle. Associates with both interphase and mitotic spindle microtubules. May be involved in nuclear divisions taking place during the development of unfertilized eggs. Required in non-mitotic cells for transport of secretory proteins from the Golgi complex to the cell surface. In Xenopus tropicalis (Western clawed frog), this protein is Kinesin-like protein KIF11.